A 101-amino-acid chain; its full sequence is Small ribosomal subunit protein uS14 (101 aa).

Belongs to the universal ribosomal protein uS14 family. As to quaternary structure, part of the 30S ribosomal subunit. Contacts proteins S3 and S10.

In terms of biological role, binds 16S rRNA, required for the assembly of 30S particles and may also be responsible for determining the conformation of the 16S rRNA at the A site. The chain is Small ribosomal subunit protein uS14 from Francisella tularensis subsp. tularensis (strain FSC 198).